Here is a 463-residue protein sequence, read N- to C-terminus: Mitochondrial dynamics protein MID51 (463 aa).

The Mitochondrial intermembrane portion of the chain corresponds to methionine 1–valine 23. The chain crosses the membrane as a helical span at residues leucine 24–valine 46. The Cytoplasmic segment spans residues lysine 47–threonine 463. The tract at residues methionine 49 to glutamine 195 is dimerization. Phosphoserine is present on residues serine 55, serine 59, serine 79, and serine 94. The tract at residues proline 57–methionine 77 is disordered. Residues alanine 160–arginine 169 are important for interaction with DNM1L. ADP-binding residues include serine 187, serine 189, and histidine 201. Residues arginine 234–arginine 243 form an important for interaction with DNM1L region. ADP contacts are provided by serine 340, arginine 342, and lysine 368.

It belongs to the MID49/MID51 family. As to quaternary structure, homodimer. Interacts with DNM1L.

It is found in the mitochondrion outer membrane. Its function is as follows. Mitochondrial outer membrane protein which regulates mitochondrial fission/fusion dynamics. Promotes the recruitment and association of the fission mediator dynamin-related protein 1 (DNM1L) to the mitochondrial surface independently of the mitochondrial fission FIS1 and MFF proteins. Regulates DNM1L GTPase activity and DNM1L oligomerization. Binds ADP and can also bind GDP, although with lower affinity. Does not bind CDP, UDP, ATP, AMP or GTP. Inhibits DNM1L GTPase activity in the absence of bound ADP. Requires ADP to stimulate DNM1L GTPase activity and the assembly of DNM1L into long, oligomeric tubules with a spiral pattern, as opposed to the ring-like DNM1L oligomers observed in the absence of bound ADP. Does not require ADP for its function in recruiting DNM1L. The sequence is that of Mitochondrial dynamics protein MID51 (Mief1) from Rattus norvegicus (Rat).